A 270-amino-acid chain; its full sequence is Mevalonyl-coenzyme A hydratase sidH (270 aa).

The short motif at 268–270 is the PTS1-type peroxisomal targeting signal element; the sequence is SKL.

The protein belongs to the enoyl-CoA hydratase/isomerase family.

The protein localises to the peroxisome. It participates in siderophore biosynthesis. In terms of biological role, mevalonyl-coenzyme A hydratase; part of the siderophore biosynthetic pathway. Aspergillus fumigatus produces 4 types of siderophores, low-molecular-mass iron chelators, including excreted fusarinine C (FsC) and triacetylfusarinine C (TAFC) for iron uptake and intacellular ferricrocin (FC) for hyphal and hydroxyferricrocin (HFC) for conidial iron distribution and storage. TAFC consists of 3 N(2)-acetyl-N(5)-anhydromevalonyl-N(5)-hydroxyornithine residues cyclically linked by ester bonds; FC is a cyclic hexapeptide with the structure Gly-Ser-Gly-(N(5)-acetyl-N(5)-hydroxyornithine)x3. The biosynthesis of all four siderophores depends on the hydroxylation of ornithine, catalyzed by the monooxygenase sidA. Subsequently, the pathways for biosynthesis of extra- and intracellular siderophores split. For biosynthesis of extracellular siderophores, the transacylase sidF transfers anhydromevalonyl to N(5)-hydroxyornithine. The required anhydromevalonyl-CoA moiety is derived from mevalonate by CoA ligation and dehydration catalyzed by sidI and sidH respectively. The acetylation of N(5)-hydroxyornithine for FC biosynthesis involves the constitutively expressed sidL. FC is hydroxylated to HFC by an as yet uncharacterized enzyme during conidiation. Assembly of fusarinine C (FsC) and FC is catalyzed by two different nonribosomal peptide synthetases (NRPS), sidD and sidC respectively. Subsequently, sidG catalyzes N2-acetylation of FsC for forming TAFC. Both extra- and intracellular siderophores are crucial for growth during iron limitation and virulence. This Aspergillus fumigatus (strain ATCC MYA-4609 / CBS 101355 / FGSC A1100 / Af293) (Neosartorya fumigata) protein is Mevalonyl-coenzyme A hydratase sidH.